Reading from the N-terminus, the 359-residue chain is tRNA-specific 2-thiouridylase MnmA (359 aa).

ATP contacts are provided by residues 7–14 (AMSGGVDS) and Met-33. Cys-101 serves as the catalytic Nucleophile. An intrachain disulfide couples Cys-101 to Cys-198. Residue Gly-125 participates in ATP binding. The interaction with tRNA stretch occupies residues 148–150 (KDQ). The active-site Cysteine persulfide intermediate is Cys-198.

It belongs to the MnmA/TRMU family.

The protein localises to the cytoplasm. It catalyses the reaction S-sulfanyl-L-cysteinyl-[protein] + uridine(34) in tRNA + AH2 + ATP = 2-thiouridine(34) in tRNA + L-cysteinyl-[protein] + A + AMP + diphosphate + H(+). In terms of biological role, catalyzes the 2-thiolation of uridine at the wobble position (U34) of tRNA, leading to the formation of s(2)U34. In Chloroflexus aurantiacus (strain ATCC 29366 / DSM 635 / J-10-fl), this protein is tRNA-specific 2-thiouridylase MnmA.